The primary structure comprises 84 residues: Small ribosomal subunit protein bS20 (84 aa).

It belongs to the bacterial ribosomal protein bS20 family.

Functionally, binds directly to 16S ribosomal RNA. This chain is Small ribosomal subunit protein bS20, found in Phocaeicola vulgatus (strain ATCC 8482 / DSM 1447 / JCM 5826 / CCUG 4940 / NBRC 14291 / NCTC 11154) (Bacteroides vulgatus).